We begin with the raw amino-acid sequence, 60 residues long: Large ribosomal subunit protein bL32 (60 aa).

Disordered regions lie at residues 1 to 28 (MAVQQNKKSPSKRGMHRSHNALALPGIA) and 41 to 60 (HISPNGFYRGRQVLKPKSEA). Residues 9-19 (SPSKRGMHRSH) are compositionally biased toward basic residues.

Belongs to the bacterial ribosomal protein bL32 family.

This Verminephrobacter eiseniae (strain EF01-2) protein is Large ribosomal subunit protein bL32.